The following is a 162-amino-acid chain: NADH-quinone oxidoreductase subunit I (162 aa).

4Fe-4S ferredoxin-type domains lie at 54-83 (RRYE…IESE) and 93-122 (TRYD…ETQI). [4Fe-4S] cluster-binding residues include Cys-63, Cys-66, Cys-69, Cys-73, Cys-102, Cys-105, Cys-108, and Cys-112.

It belongs to the complex I 23 kDa subunit family. As to quaternary structure, NDH-1 is composed of 14 different subunits. Subunits NuoA, H, J, K, L, M, N constitute the membrane sector of the complex. Requires [4Fe-4S] cluster as cofactor.

The protein resides in the cell inner membrane. It carries out the reaction a quinone + NADH + 5 H(+)(in) = a quinol + NAD(+) + 4 H(+)(out). NDH-1 shuttles electrons from NADH, via FMN and iron-sulfur (Fe-S) centers, to quinones in the respiratory chain. The immediate electron acceptor for the enzyme in this species is believed to be ubiquinone. Couples the redox reaction to proton translocation (for every two electrons transferred, four hydrogen ions are translocated across the cytoplasmic membrane), and thus conserves the redox energy in a proton gradient. The chain is NADH-quinone oxidoreductase subunit I from Burkholderia cenocepacia (strain HI2424).